The following is a 143-amino-acid chain: Ribosome maturation factor RimP (143 aa).

Belongs to the RimP family.

It localises to the cytoplasm. In terms of biological role, required for maturation of 30S ribosomal subunits. The sequence is that of Ribosome maturation factor RimP from Borrelia turicatae (strain 91E135).